The primary structure comprises 770 residues: Glutamate carboxypeptidase 2 homolog (770 aa).

Residues 1-25 are Cytoplasmic-facing; the sequence is MPYVGVGAQTVSTSLTGAPMVKAYI. Residues 26-42 form a helical; Signal-anchor for type II membrane protein membrane-spanning segment; sequence AIAASLIFVFCIAALGV. The Extracellular portion of the chain corresponds to 43-770; it reads HHSERKFNKF…CVVNTLRDVI (728 aa). Residues Asn175 and Asn337 are each glycosylated (N-linked (GlcNAc...) asparagine). The catalytic stretch occupies residues 282 to 597; the sequence is SKKELFKGRT…QYWAELAKTF (316 aa). 2 residues coordinate Zn(2+): His387 and Asp397. Residue Asn417 is glycosylated (N-linked (GlcNAc...) asparagine). Glu435 functions as the Nucleophile in the catalytic mechanism. Positions 436 and 464 each coordinate Zn(2+). N-linked (GlcNAc...) asparagine glycans are attached at residues Asn469, Asn546, and Asn551. Residue His562 coordinates Zn(2+). N-linked (GlcNAc...) asparagine glycosylation is found at Asn579, Asn606, and Asn630.

The protein belongs to the peptidase M28 family. M28B subfamily. It depends on Zn(2+) as a cofactor.

Its subcellular location is the membrane. It catalyses the reaction Release of an unsubstituted, C-terminal glutamyl residue, typically from Ac-Asp-Glu or folylpoly-gamma-glutamates.. The polypeptide is Glutamate carboxypeptidase 2 homolog (Caenorhabditis elegans).